The chain runs to 335 residues: MTIVVGFEGSANKIGVGIIQDGKVLSNPRRTYITPPGQGFMPSDTARHHRSCILDVLQEALEESNIKPEDVDCVAYTKGPGMGAPLLSVAIVARTVAQLWKKPLLGVNHCIGHIEMGRLITGAENPTVLYVSGGNTQVIAYSERCYRIFGETIDIAVGNCLDRFARVLKISNDPSPGYNIEQMAKKGKKFVELPYTVKGMDVSFSGILSYIEDMSHKMLSSGECTPEDLCFSLQETLFSMLVEITERAMAHCGSQEVLIVGGVGCNVRLQEMMGVMCEERGAKIFATDERFCIDNGAMIAQAGWEMFRAGQVTNLQDSWITQRYRTDEVEVTWRD.

Residues histidine 109, histidine 113, and tyrosine 130 each contribute to the a divalent metal cation site. Substrate contacts are provided by residues 130–134 (YVSGG), aspartate 162, glycine 177, glutamate 181, and asparagine 266. Aspartate 294 is an a divalent metal cation binding site.

The protein belongs to the KAE1 / TsaD family. In terms of assembly, component of the EKC/KEOPS complex composed of at least tp53rk, tprkb, osgep and lage3; the whole complex dimerizes. The cofactor is a divalent metal cation.

It localises to the cytoplasm. It is found in the nucleus. It catalyses the reaction L-threonylcarbamoyladenylate + adenosine(37) in tRNA = N(6)-L-threonylcarbamoyladenosine(37) in tRNA + AMP + H(+). Its function is as follows. Component of the EKC/KEOPS complex that is required for the formation of a threonylcarbamoyl group on adenosine at position 37 (t(6)A37) in tRNAs that read codons beginning with adenine. The complex is probably involved in the transfer of the threonylcarbamoyl moiety of threonylcarbamoyl-AMP (TC-AMP) to the N6 group of A37. Osgep likely plays a direct catalytic role in this reaction, but requires other protein(s) of the complex to fulfill this activity. This Xenopus laevis (African clawed frog) protein is tRNA N6-adenosine threonylcarbamoyltransferase.